The primary structure comprises 254 residues: Vitamin B12 import ATP-binding protein BtuD (254 aa).

One can recognise an ABC transporter domain in the interval 1 to 239 (MHINHISVGN…ENLQQVFETP (239 aa)). An ATP-binding site is contributed by 29-36 (GPNGSGKS).

Belongs to the ABC transporter superfamily. Vitamin B12 importer (TC 3.A.1.13.1) family. The complex is composed of two ATP-binding proteins (BtuD), two transmembrane proteins (BtuC) and a solute-binding protein (BtuF).

The protein resides in the cell inner membrane. It carries out the reaction an R-cob(III)alamin(out) + ATP + H2O = an R-cob(III)alamin(in) + ADP + phosphate + H(+). Functionally, part of the ABC transporter complex BtuCDF involved in vitamin B12 import. Responsible for energy coupling to the transport system. This Vibrio vulnificus (strain YJ016) protein is Vitamin B12 import ATP-binding protein BtuD.